We begin with the raw amino-acid sequence, 517 residues long: NAD(P)H-quinone oxidoreductase subunit 2 (517 aa).

14 helical membrane passes run Ile-16–Phe-36, Trp-43–Trp-63, Leu-80–Ile-100, Leu-110–Ala-130, Leu-133–Tyr-153, Leu-168–Leu-188, Leu-211–Val-231, Pro-245–Ile-265, Trp-279–Leu-299, Met-307–Thr-327, Val-335–Phe-355, Leu-379–Gly-399, Ile-401–Val-421, and Val-467–Phe-487.

The protein belongs to the complex I subunit 2 family. NDH-1 can be composed of about 15 different subunits; different subcomplexes with different compositions have been identified which probably have different functions.

Its subcellular location is the cellular thylakoid membrane. It catalyses the reaction a plastoquinone + NADH + (n+1) H(+)(in) = a plastoquinol + NAD(+) + n H(+)(out). It carries out the reaction a plastoquinone + NADPH + (n+1) H(+)(in) = a plastoquinol + NADP(+) + n H(+)(out). Functionally, NDH-1 shuttles electrons from an unknown electron donor, via FMN and iron-sulfur (Fe-S) centers, to quinones in the respiratory and/or the photosynthetic chain. The immediate electron acceptor for the enzyme in this species is believed to be plastoquinone. Couples the redox reaction to proton translocation, and thus conserves the redox energy in a proton gradient. Cyanobacterial NDH-1 also plays a role in inorganic carbon-concentration. The polypeptide is NAD(P)H-quinone oxidoreductase subunit 2 (Rippkaea orientalis (strain PCC 8801 / RF-1) (Cyanothece sp. (strain PCC 8801))).